Here is a 1191-residue protein sequence, read N- to C-terminus: Probable inositol polyphosphate 5-phosphatase C9G1.10c (1191 aa).

Composition is skewed to polar residues over residues 1–10 (MASRQGFSNV), 72–101 (QVSS…NPSN), 114–135 (SDSS…SFVS), 151–161 (SFQSSVQSTKG), and 181–193 (NFSS…SPIS). The interval 1–193 (MASRQGFSNV…SKAGSSSPIS (193 aa)) is disordered. The residue at position 195 (serine 195) is a Phosphoserine. 3 disordered regions span residues 205-281 (SQSP…PQPV), 294-334 (SQQL…DASL), and 355-425 (IPEK…SSSS). Over residues 268–280 (TPPPIPSPRPPQP) the composition is skewed to pro residues. Basic residues predominate over residues 302 to 311 (SPRKPPKPPL). Polar residues-rich tracts occupy residues 316–334 (TQRS…DASL), 367–382 (HTLS…SENL), and 400–413 (LATN…VSTE). Positions 414-425 (QSDPSVAASSSS) are enriched in low complexity.

This sequence belongs to the inositol 1,4,5-trisphosphate 5-phosphatase family.

The protein localises to the cytoplasm. The protein is Probable inositol polyphosphate 5-phosphatase C9G1.10c of Schizosaccharomyces pombe (strain 972 / ATCC 24843) (Fission yeast).